A 192-amino-acid polypeptide reads, in one-letter code: uncharacterized protein (192 aa).

In terms of domain architecture, Nudix hydrolase spans 29 to 160 (HRQAAVLIPI…PLDIYRRGDS (132 aa)). Positions 67-89 (GAVDDTDASVIAAALREAEEEVA) match the Nudix box motif. Residues glutamate 83 and glutamate 87 each contribute to the Mg(2+) site.

Belongs to the Nudix hydrolase family. PCD1 subfamily. The cofactor is Mn(2+). Mg(2+) serves as cofactor.

Probably mediates the hydrolysis of some nucleoside diphosphate derivatives. This is an uncharacterized protein from Shigella flexneri serotype 5b (strain 8401).